The sequence spans 394 residues: Elongation factor Tu (394 aa).

Residues 10 to 204 form the tr-type G domain; that stretch reads KPHVNVGTIG…HLDNYIPEPE (195 aa). The interval 19 to 26 is G1; it reads GHVDHGKT. GTP is bound at residue 19–26; that stretch reads GHVDHGKT. T26 serves as a coordination point for Mg(2+). The G2 stretch occupies residues 60-64; that stretch reads GITIN. The G3 stretch occupies residues 81–84; it reads DCPG. GTP-binding positions include 81–85 and 136–139; these read DCPGH and NKCD. Positions 136-139 are G4; sequence NKCD. Residues 174-176 form a G5 region; sequence SAL.

This sequence belongs to the TRAFAC class translation factor GTPase superfamily. Classic translation factor GTPase family. EF-Tu/EF-1A subfamily. Monomer.

The protein resides in the cytoplasm. The enzyme catalyses GTP + H2O = GDP + phosphate + H(+). Its function is as follows. GTP hydrolase that promotes the GTP-dependent binding of aminoacyl-tRNA to the A-site of ribosomes during protein biosynthesis. The sequence is that of Elongation factor Tu from Histophilus somni (strain 129Pt) (Haemophilus somnus).